The sequence spans 334 residues: Aspartate carbamoyltransferase catalytic subunit (334 aa).

Residues Arg-71 and Thr-72 each contribute to the carbamoyl phosphate site. Lys-99 is a binding site for L-aspartate. Arg-121, His-151, and Gln-154 together coordinate carbamoyl phosphate. L-aspartate contacts are provided by Arg-184 and Arg-239. Carbamoyl phosphate-binding residues include Gly-280 and Pro-281.

Belongs to the aspartate/ornithine carbamoyltransferase superfamily. ATCase family. In terms of assembly, heterododecamer (2C3:3R2) of six catalytic PyrB chains organized as two trimers (C3), and six regulatory PyrI chains organized as three dimers (R2).

It carries out the reaction carbamoyl phosphate + L-aspartate = N-carbamoyl-L-aspartate + phosphate + H(+). It functions in the pathway pyrimidine metabolism; UMP biosynthesis via de novo pathway; (S)-dihydroorotate from bicarbonate: step 2/3. Catalyzes the condensation of carbamoyl phosphate and aspartate to form carbamoyl aspartate and inorganic phosphate, the committed step in the de novo pyrimidine nucleotide biosynthesis pathway. The sequence is that of Aspartate carbamoyltransferase catalytic subunit from Pseudomonas fluorescens (strain SBW25).